The sequence spans 312 residues: Glyoxylate/hydroxypyruvate reductase A (312 aa).

R227 is an active-site residue. The Proton donor role is filled by H275.

Belongs to the D-isomer specific 2-hydroxyacid dehydrogenase family. GhrA subfamily.

The protein localises to the cytoplasm. The catalysed reaction is glycolate + NADP(+) = glyoxylate + NADPH + H(+). It carries out the reaction (R)-glycerate + NAD(+) = 3-hydroxypyruvate + NADH + H(+). The enzyme catalyses (R)-glycerate + NADP(+) = 3-hydroxypyruvate + NADPH + H(+). Its function is as follows. Catalyzes the NADPH-dependent reduction of glyoxylate and hydroxypyruvate into glycolate and glycerate, respectively. This is Glyoxylate/hydroxypyruvate reductase A from Escherichia coli O17:K52:H18 (strain UMN026 / ExPEC).